Reading from the N-terminus, the 252-residue chain is Phosphoglycolate phosphatase (252 aa).

The active-site Nucleophile is the D13. Positions 13, 15, and 192 each coordinate Mg(2+).

This sequence belongs to the HAD-like hydrolase superfamily. CbbY/CbbZ/Gph/YieH family. As to quaternary structure, monomer. The cofactor is Mg(2+). Requires chloride as cofactor.

The enzyme catalyses 2-phosphoglycolate + H2O = glycolate + phosphate. The protein operates within organic acid metabolism; glycolate biosynthesis; glycolate from 2-phosphoglycolate: step 1/1. Its function is as follows. Specifically catalyzes the dephosphorylation of 2-phosphoglycolate. Is involved in the dissimilation of the intracellular 2-phosphoglycolate formed during the DNA repair of 3'-phosphoglycolate ends, a major class of DNA lesions induced by oxidative stress. The sequence is that of Phosphoglycolate phosphatase from Salmonella typhi.